Here is an 86-residue protein sequence, read N- to C-terminus: MSKICQITGKKAMIGNNVSHSKRRTKRTFDVNLFTKKFYYVEQDCWISLNICANGLRVINKKGLDAALNEAVTKGYCDWKSIKIIG.

This sequence belongs to the bacterial ribosomal protein bL28 family.

This is Large ribosomal subunit protein bL28 from Phocaeicola vulgatus (strain ATCC 8482 / DSM 1447 / JCM 5826 / CCUG 4940 / NBRC 14291 / NCTC 11154) (Bacteroides vulgatus).